We begin with the raw amino-acid sequence, 899 residues long: Semaphorin-1A (899 aa).

Residues 1–20 (MLNSHNTNHNNNSASNSNYN) show a composition bias toward low complexity. The segment at 1 to 24 (MLNSHNTNHNNNSASNSNYNKGHK) is disordered. The Cytoplasmic segment spans residues 1 to 40 (MLNSHNTNHNNNSASNSNYNKGHKMHLKSATAKATIMKHK). Residues 41 to 61 (LSKFYGYGWMQVFLLLTVLVI) form a helical membrane-spanning segment. At 62–657 (GNQSAWQENI…INAQYTVETL (596 aa)) the chain is on the extracellular side. Asn63, Asn90, and Asn117 each carry an N-linked (GlcNAc...) asparagine glycan. In terms of domain architecture, Sema spans 74-543 (KLYVELGPED…TDSQVVAIQL (470 aa)). 2 disulfides stabilise this stretch: Cys141-Cys151 and Cys169-Cys178. 3 N-linked (GlcNAc...) asparagine glycosylation sites follow: Asn187, Asn207, and Asn311. Disulfide bonds link Cys288–Cys402 and Cys312–Cys361. Asn404 carries N-linked (GlcNAc...) asparagine glycosylation. A helical membrane pass occupies residues 658–678 (VMAVLAGSIFSLLVGFFTGYF). The Cytoplasmic portion of the chain corresponds to 679–899 (CGRRCHKDED…PKNCSYIYRD (221 aa)). 2 disordered regions span residues 735-766 (VLLP…QGPN) and 798-899 (VMGD…IYRD). The segment covering 809–827 (FSTTRSVKKAVNNTNTRNR) has biased composition (polar residues). Basic residues predominate over residues 828–837 (SLGRARRQPP). Low complexity predominate over residues 847–876 (SNSPQQQQQQSQQPHSSSGSSPVMSNSSSS).

This sequence belongs to the semaphorin family. As to expression, expressed by subsets of neurons and muscles.

The protein localises to the cell membrane. Involved in growth cone guidance through its role in axonal repulsion. Function in neurons is essential for adult survival, motor neuron survival, and is important for climbing behavior and activity. This chain is Semaphorin-1A, found in Drosophila melanogaster (Fruit fly).